The primary structure comprises 813 residues: MASTPRAKTFKSPTKTPSNIYRKSYLSPSSTSHTPQTPETHTPLRRSARHVSRKIDLGNDPIDAPGNDPIEGMNLIRKRERAPRKPTTDVVPSKSKKTETPKKKKKIDSFTPVSPIRSETIKKTKKKKRVYYNKVEFDETEFEIGDDVYVKRREDSNSDEEEDPEIEDCQICFKSDTNIMIECDDCLGGFHLKCLKPPLKEVPEGDWICQFCEVKKSGQSQTLDLPKPPEGKKLARTMREKLLSGDLWAARIDKLWKEVDDGVYWIRARWYMIPEETVSGRQPHNLKRELYLTNDFADIEMECILRHCSVKCPKEFSKASNDGDDVFLCEYEYDVHWRSFKRLAELADGDSDSDQEWNGRKEEEVDDSDEEMELDDEVLKSKRGGLTSARGGANSRKGRFFGVEKVGMKLIPEHVRCHKQSELEKAKATLLLATRPKSLPCRSKEMEEITSFIKGSISDDQCLGRCMYIHGVPGTGKTISVLSVMKNLKAEVEEGSVSPYCFVEINGLKLASPENIYSVIYEALSGHRVGWKKALQCLNERFAEGKRIGKEDEKPCILLIDELDLLVTRNQSVLYNILDWPTKPNSKLVVLGIANTMDLPEKLLPRISSRMGIQRLCFGPYNHTQLQEIISTRLNGIDAFEKTAIEFASRKVAAISGDARRALEICRRAAEVADHRLNTNKSAKNQLVIMADVEAAIQEMFQAPHIQVMKSVSKLSKIFLTAMVHELYKTGMAETTFDRVATTVSSICLTNGEAFPGWDILLKIGCDLGECRIILCEPGEKHRLQKLQLNFPSDDVAFALKDNKDLPWLANYL.

Residues 1 to 109 (MASTPRAKTF…TPKKKKKIDS (109 aa)) are disordered. Polar residues predominate over residues 11 to 21 (KSPTKTPSNIY). Residues 27–41 (SPSSTSHTPQTPETH) show a composition bias toward low complexity. The span at 43 to 52 (PLRRSARHVS) shows a compositional bias: basic residues. The Nuclear localization signal signature appears at 83 to 90 (PRKPTTDV). Residues 163–187 (DPEIEDCQICFKSDTNIMIECDDCL) are histone H3 binding. A PHD-type zinc finger spans residues 166–215 (IEDCQICFKSDTNIMIECDDCLGGFHLKCLKPPLKEVPEGDWICQFCEVK). 6 residues coordinate Zn(2+): Cys169, Cys172, Cys183, Cys186, His191, and Cys194. Positions 203 to 207 (PEGDW) are histone H3 binding. Cys209 and Cys212 together coordinate Zn(2+). A BAH domain is found at 226 to 344 (PKPPEGKKLA…VHWRSFKRLA (119 aa)). The interval 319 to 324 (ASNDGD) is histone H3 binding. Residues 349-372 (GDSDSDQEWNGRKEEEVDDSDEEM) form a disordered region. Residues 436 to 803 (PKSLPCRSKE…DDVAFALKDN (368 aa)) form a necessary and sufficient for ORC complex assembly region. 471 to 479 (GVPGTGKTI) is an ATP binding site. Residues Asp561 and Glu562 each contribute to the Mg(2+) site. The ATP site is built by Glu562, Asn595, and Arg660.

The protein belongs to the ORC1 family. Component of the origin recognition complex (ORC) composed of at least ORC1 (ORC1A or ORC1B), ORC2, ORC3, ORC4, ORC5 and ORC6. ORC is regulated in a cell-cycle and development dependent manner. It is sequentially assembled at the exit from anaphase of mitosis and disassembled as cells enter S phase. Interacts directly with ORC2 and ORC5. Binds mostly unmodified histone H3, and, with lower efficiency, H3K4me1 H3K4me2 and H3K4me3. As to expression, follow a cell-cycle regulation with a peak at the G1/S-phase. Mostly expressed in flower buds, and, to a lower exent, in roots, leaves and stems.

It localises to the nucleus. Its function is as follows. Essential protein required for ovules fertilization. Component of the origin recognition complex (ORC) that binds origins of replication. It has a role in both chromosomal replication and mating type transcriptional silencing. Binds to the ARS consensus sequence (ACS) of origins of replication. H3K4me3 effector that positively regulates the transcription of a subset of genes. This is Origin of replication complex subunit 1B from Arabidopsis thaliana (Mouse-ear cress).